The sequence spans 892 residues: Phenylalanine--tRNA ligase beta subunit (892 aa).

In terms of domain architecture, tRNA-binding spans 39 to 150; it reads NPGVEGVVVG…PGLEPGMDVA (112 aa). The region spanning 406-569 is the B5 domain; the sequence is AVPPVILLRT…RCEGYDAIPL (164 aa). The insert stretch occupies residues 442-518; the sequence is VLTPADLAAD…ALLGGGESDG (77 aa). The Mg(2+) site is built by Asp547, Asp553, Glu556, and Glu557. The FDX-ACB domain maps to 799 to 891; it reads PRFPAVTRDV…ALKALGAELR (93 aa).

Belongs to the phenylalanyl-tRNA synthetase beta subunit family. Type 1 subfamily. Tetramer of two alpha and two beta subunits. The cofactor is Mg(2+).

The protein resides in the cytoplasm. It catalyses the reaction tRNA(Phe) + L-phenylalanine + ATP = L-phenylalanyl-tRNA(Phe) + AMP + diphosphate + H(+). The chain is Phenylalanine--tRNA ligase beta subunit from Symbiobacterium thermophilum (strain DSM 24528 / JCM 14929 / IAM 14863 / T).